A 331-amino-acid chain; its full sequence is Adenosine deaminase (331 aa).

Zn(2+)-binding residues include His12 and His14. Substrate is bound by residues His14 and Asp16. His197 contacts Zn(2+). The Proton donor role is filled by Glu200. A Zn(2+)-binding site is contributed by Asp278.

It belongs to the metallo-dependent hydrolases superfamily. Adenosine and AMP deaminases family. Adenosine deaminase subfamily. Zn(2+) is required as a cofactor.

The enzyme catalyses adenosine + H2O + H(+) = inosine + NH4(+). It catalyses the reaction 2'-deoxyadenosine + H2O + H(+) = 2'-deoxyinosine + NH4(+). Catalyzes the hydrolytic deamination of adenosine and 2-deoxyadenosine. The sequence is that of Adenosine deaminase from Shewanella pealeana (strain ATCC 700345 / ANG-SQ1).